Reading from the N-terminus, the 389-residue chain is Leucine aminopeptidase 1 (389 aa).

Positions 1–18 (MKSAALLLPLYAAAFAAA) are cleaved as a signal peptide. Positions 19-89 (AFHHEHAQAV…TLKRRINAAS (71 aa)) are excised as a propeptide. N-linked (GlcNAc...) asparagine glycosylation is present at asparagine 99. Zn(2+)-binding residues include histidine 188, aspartate 207, glutamate 246, and aspartate 273. A disulfide bridge connects residues cysteine 322 and cysteine 326. Residue histidine 355 coordinates Zn(2+).

It belongs to the peptidase M28 family. M28E subfamily. In terms of assembly, monomer. It depends on Zn(2+) as a cofactor.

Its subcellular location is the secreted. Its function is as follows. Extracellular aminopeptidase that allows assimilation of proteinaceous substrates. The protein is Leucine aminopeptidase 1 (lap1) of Pyrenophora teres f. teres (strain 0-1) (Barley net blotch fungus).